A 94-amino-acid chain; its full sequence is uncharacterized protein (94 aa).

The next 2 helical transmembrane spans lie at T9–T29 and L34–V54.

The protein localises to the cell membrane. This is an uncharacterized protein from Bacillus subtilis (strain 168).